Reading from the N-terminus, the 353-residue chain is tRNA-specific 2-thiouridylase MnmA 2 (353 aa).

Residues 9 to 16 (AMSGGVDS) and M35 each bind ATP. The active-site Nucleophile is C98. The cysteines at positions 98 and 194 are disulfide-linked. Residue G122 participates in ATP binding. Positions 144 to 146 (KDQ) are interaction with tRNA. C194 (cysteine persulfide intermediate) is an active-site residue. An interaction with tRNA region spans residues 300-301 (RY).

The protein belongs to the MnmA/TRMU family.

The protein localises to the cytoplasm. The catalysed reaction is S-sulfanyl-L-cysteinyl-[protein] + uridine(34) in tRNA + AH2 + ATP = 2-thiouridine(34) in tRNA + L-cysteinyl-[protein] + A + AMP + diphosphate + H(+). Functionally, catalyzes the 2-thiolation of uridine at the wobble position (U34) of tRNA, leading to the formation of s(2)U34. In Clostridium botulinum (strain ATCC 19397 / Type A), this protein is tRNA-specific 2-thiouridylase MnmA 2.